A 58-amino-acid polypeptide reads, in one-letter code: MDKVKFKKGDLVKVIAGKHKGTEGPIIRVLREKSRVVIEGITNIKHVKPSQDNTEAGI.

The protein belongs to the universal ribosomal protein uL24 family. In terms of assembly, part of the 50S ribosomal subunit.

One of two assembly initiator proteins, it binds directly to the 5'-end of the 23S rRNA, where it nucleates assembly of the 50S subunit. Its function is as follows. One of the proteins that surrounds the polypeptide exit tunnel on the outside of the subunit. The polypeptide is Large ribosomal subunit protein uL24 (rplX) (Spiroplasma citri).